A 203-amino-acid polypeptide reads, in one-letter code: Glycerol-3-phosphate acyltransferase (203 aa).

Transmembrane regions (helical) follow at residues 5-25 (VLGL…FGVV), 55-75 (KLGI…ILVA), 88-108 (FTVL…WLGF), 114-134 (VATG…AGAV), and 162-182 (FVAH…AALI).

Belongs to the PlsY family. Probably interacts with PlsX.

It localises to the cell inner membrane. It catalyses the reaction an acyl phosphate + sn-glycerol 3-phosphate = a 1-acyl-sn-glycero-3-phosphate + phosphate. Its pathway is lipid metabolism; phospholipid metabolism. Functionally, catalyzes the transfer of an acyl group from acyl-phosphate (acyl-PO(4)) to glycerol-3-phosphate (G3P) to form lysophosphatidic acid (LPA). This enzyme utilizes acyl-phosphate as fatty acyl donor, but not acyl-CoA or acyl-ACP. In Anaeromyxobacter sp. (strain Fw109-5), this protein is Glycerol-3-phosphate acyltransferase.